The sequence spans 355 residues: Beta-1,2-mannobiose phosphorylase (355 aa).

Residues Asn-31, Arg-46, Arg-89, Glu-140–Asp-141, Lys-188, Tyr-273, and Asp-333 contribute to the beta-D-Manp-(1-&gt;2)-beta-D-Manp-(1-&gt;2)-D-Manp site.

It belongs to the glycosyl hydrolase 130 family. In terms of assembly, homodimer.

The catalysed reaction is beta-D-mannopyranosyl-(1-&gt;2)-D-mannopyranose + phosphate = alpha-D-mannose 1-phosphate + D-mannose. Catalyzes the reversible phosphorolysis of 1,2-beta-oligomannan. In phosphorolytic reactions, prefers beta-1,2-mannobiose (beta-1,2-Man2) as substrate, but can also use beta-1,2-mannotriose. In Listeria innocua serovar 6a (strain ATCC BAA-680 / CLIP 11262), this protein is Beta-1,2-mannobiose phosphorylase.